Consider the following 368-residue polypeptide: UPF0284 protein Tery_1555 (368 aa).

Belongs to the UPF0284 family.

The chain is UPF0284 protein Tery_1555 from Trichodesmium erythraeum (strain IMS101).